The primary structure comprises 467 residues: Glutamate--tRNA ligase (467 aa).

A 'HIGH' region motif is present at residues 9-19 (PSPTGFLHIGG). Residues 241-245 (KLSKR) carry the 'KMSKS' region motif. Lys244 is a binding site for ATP.

This sequence belongs to the class-I aminoacyl-tRNA synthetase family. Glutamate--tRNA ligase type 1 subfamily. As to quaternary structure, monomer.

It localises to the cytoplasm. It carries out the reaction tRNA(Glu) + L-glutamate + ATP = L-glutamyl-tRNA(Glu) + AMP + diphosphate. Its function is as follows. Catalyzes the attachment of glutamate to tRNA(Glu) in a two-step reaction: glutamate is first activated by ATP to form Glu-AMP and then transferred to the acceptor end of tRNA(Glu). The protein is Glutamate--tRNA ligase of Methylobacillus flagellatus (strain ATCC 51484 / DSM 6875 / VKM B-1610 / KT).